The chain runs to 471 residues: Putative multidrug resistance protein MdtD (471 aa).

The Periplasmic portion of the chain corresponds to 1-11 (MTDLPDSTRWQ). A helical transmembrane segment spans residues 12-32 (LWIVAFGFFMQSLDTTIVNTA). Residues 33-48 (LPSMAQSLGESPLHMH) are Cytoplasmic-facing. The helical transmembrane segment at 49–69 (MVIVSYVLTVAVMLPASGWLA) threads the bilayer. Residues 70 to 76 (DKVGVRN) lie on the Periplasmic side of the membrane. The chain crosses the membrane as a helical span at residues 77–97 (IFFTAIVLFTLGSLFCALSGT). Over 98–101 (LNEL) the chain is Cytoplasmic. A helical membrane pass occupies residues 102–124 (LLARALQGVGGAMMVPVGRLTVM). Residues 125–137 (KIVPREQYMAAMT) lie on the Periplasmic side of the membrane. A helical transmembrane segment spans residues 138 to 158 (FVTLPGQVGPLLGPALGGLLV). The Cytoplasmic portion of the chain corresponds to 159 to 164 (EYASWH). The chain crosses the membrane as a helical span at residues 165 to 185 (WIFLINIPVGIIGAIATLMLM). The Periplasmic portion of the chain corresponds to 186-196 (PNYTMQTRRFD). The helical transmembrane segment at 197–217 (LSGFLLLAVGMAVLTLALDGS) threads the bilayer. Residues 218–224 (KGTGLSP) lie on the Cytoplasmic side of the membrane. Residues 225-245 (LTIAGLVAVGVVALVLYLLHA) form a helical membrane-spanning segment. Over 246–262 (RNNNRALFSLKLFRTRT) the chain is Periplasmic. Residues 263-283 (FSLGLAGSFAGRIGSGMLPFM) form a helical membrane-spanning segment. At 284-285 (TP) the chain is on the cytoplasmic side. A helical membrane pass occupies residues 286–306 (VFLQIGLGFSPFHAGLMMIPM). The Periplasmic segment spans residues 307-341 (VLGSMGMKRIVVQVVNCFGYRRVLVATTLGLSLVT). The chain crosses the membrane as a helical span at residues 342 to 362 (LLFMTTALLGWYYVLPFVLFL). Residues 363–395 (QGMVNSTRFSSMNTLTLKDLPDNLASSGNSLLS) are Cytoplasmic-facing. A helical membrane pass occupies residues 396 to 416 (MIMQLSMSIGVTIAGLLLGLF). Residues 417-430 (GSQHVSVDSGTTQT) are Periplasmic-facing. A helical membrane pass occupies residues 431–451 (VFMYTWLSMALIIALPAFIFA). Over 452–471 (RVPNDTHQNVAISRRKRSAQ) the chain is Cytoplasmic.

Belongs to the major facilitator superfamily. TCR/Tet family.

Its subcellular location is the cell inner membrane. This chain is Putative multidrug resistance protein MdtD, found in Escherichia coli O139:H28 (strain E24377A / ETEC).